A 196-amino-acid polypeptide reads, in one-letter code: Probable signal peptidase I-1 (196 aa).

Topologically, residues 1-16 are cytoplasmic; it reads MQNSPIPSPWQFIKEN. A helical membrane pass occupies residues 17–35; sequence IPLLMVALVLALLLRFFVA. Topologically, residues 36–196 are periplasmic; that stretch reads EPRYIPSDSM…FVPARTIINT (161 aa). Active-site residues include S44 and K94.

The protein belongs to the peptidase S26 family.

It localises to the cell membrane. It catalyses the reaction Cleavage of hydrophobic, N-terminal signal or leader sequences from secreted and periplasmic proteins.. The sequence is that of Probable signal peptidase I-1 (lepB1) from Synechocystis sp. (strain ATCC 27184 / PCC 6803 / Kazusa).